The chain runs to 249 residues: Domoic acid biosynthesis cluster protein B (249 aa).

Its function is as follows. Unknown function: part of the gene cluster that mediates the biosynthesis of domoic acid (DA) and derivatives, natural products with neurochemical activity acting as ionotropic glutamate receptor (iGluR) agonists, thus being neurotoxins causing amnesic shellfish poisoning (ASP). In Pseudo-nitzschia multiseries (Marine planktonic diatom), this protein is Domoic acid biosynthesis cluster protein B.